The following is a 342-amino-acid chain: Isopentenyl-diphosphate delta-isomerase (342 aa).

11–12 serves as a coordination point for substrate; sequence RK. FMN contacts are provided by residues serine 68, 69-71, serine 99, and asparagine 128; that span reads SMT. Residue 99–101 coordinates substrate; sequence SQR. Glutamine 162 provides a ligand contact to substrate. Position 163 (glutamate 163) interacts with Mg(2+). FMN contacts are provided by residues lysine 194, serine 219, threonine 224, 275 to 277, and 296 to 297; these read GVR and AK.

This sequence belongs to the IPP isomerase type 2 family. Homooctamer. Dimer of tetramers. It depends on FMN as a cofactor. NADPH is required as a cofactor. Mg(2+) serves as cofactor.

It is found in the cytoplasm. It carries out the reaction isopentenyl diphosphate = dimethylallyl diphosphate. Functionally, involved in the biosynthesis of isoprenoids. Catalyzes the 1,3-allylic rearrangement of the homoallylic substrate isopentenyl (IPP) to its allylic isomer, dimethylallyl diphosphate (DMAPP). The polypeptide is Isopentenyl-diphosphate delta-isomerase (Legionella pneumophila (strain Lens)).